A 494-amino-acid chain; its full sequence is Cytochrome P450 2A6 (494 aa).

Residues Phe107 and Asn297 each coordinate substrate. Residue Cys439 coordinates heme.

The protein belongs to the cytochrome P450 family. It depends on heme as a cofactor. Liver.

It localises to the endoplasmic reticulum membrane. It is found in the microsome membrane. It catalyses the reaction 1,4-cineole + reduced [NADPH--hemoprotein reductase] + O2 = 2-exo-hydroxy-1,4-cineole + oxidized [NADPH--hemoprotein reductase] + H2O + H(+). Exhibits a high coumarin 7-hydroxylase activity. Can act in the hydroxylation of the anti-cancer drugs cyclophosphamide and ifosphamide. Competent in the metabolic activation of aflatoxin B1. Constitutes the major nicotine C-oxidase. Acts as a 1,4-cineole 2-exo-monooxygenase. Possesses low phenacetin O-deethylation activity. The sequence is that of Cytochrome P450 2A6 (CYP2A6) from Homo sapiens (Human).